The chain runs to 364 residues: Dihydroorotate dehydrogenase (quinone) (364 aa).

FMN-binding positions include 62 to 66 (AGFDK) and threonine 86. Residue lysine 66 coordinates substrate. Position 111–115 (111–115 (NRMGF)) interacts with substrate. FMN contacts are provided by asparagine 142 and asparagine 175. Asparagine 175 lines the substrate pocket. Serine 178 (nucleophile) is an active-site residue. Asparagine 180 contributes to the substrate binding site. FMN is bound by residues lysine 216 and threonine 244. 245-246 (NT) serves as a coordination point for substrate. FMN-binding positions include glycine 267, glycine 296, and 317-318 (YT).

It belongs to the dihydroorotate dehydrogenase family. Type 2 subfamily. As to quaternary structure, monomer. FMN is required as a cofactor.

It is found in the cell membrane. The catalysed reaction is (S)-dihydroorotate + a quinone = orotate + a quinol. Its pathway is pyrimidine metabolism; UMP biosynthesis via de novo pathway; orotate from (S)-dihydroorotate (quinone route): step 1/1. Catalyzes the conversion of dihydroorotate to orotate with quinone as electron acceptor. The protein is Dihydroorotate dehydrogenase (quinone) of Anaeromyxobacter dehalogenans (strain 2CP-C).